A 263-amino-acid polypeptide reads, in one-letter code: Small ribosomal subunit protein uS2 (263 aa).

A disordered region spans residues 223–246 (KSLLEQDSDANADEAEVSQEEKDA). The span at 228-240 (QDSDANADEAEVS) shows a compositional bias: acidic residues.

This sequence belongs to the universal ribosomal protein uS2 family.

This Campylobacter curvus (strain 525.92) protein is Small ribosomal subunit protein uS2.